Reading from the N-terminus, the 155-residue chain is Aspartate 1-decarboxylase (155 aa).

Ser-24 (schiff-base intermediate with substrate; via pyruvic acid) is an active-site residue. Pyruvic acid (Ser) is present on Ser-24. A substrate-binding site is contributed by Thr-56. Catalysis depends on Tyr-57, which acts as the Proton donor. Position 72–74 (72–74 (GAA)) interacts with substrate.

Belongs to the PanD family. As to quaternary structure, heterooctamer of four alpha and four beta subunits. It depends on pyruvate as a cofactor. In terms of processing, is synthesized initially as an inactive proenzyme, which is activated by self-cleavage at a specific serine bond to produce a beta-subunit with a hydroxyl group at its C-terminus and an alpha-subunit with a pyruvoyl group at its N-terminus.

The protein resides in the cytoplasm. The enzyme catalyses L-aspartate + H(+) = beta-alanine + CO2. Its pathway is cofactor biosynthesis; (R)-pantothenate biosynthesis; beta-alanine from L-aspartate: step 1/1. Functionally, catalyzes the pyruvoyl-dependent decarboxylation of aspartate to produce beta-alanine. The polypeptide is Aspartate 1-decarboxylase (Methylocella silvestris (strain DSM 15510 / CIP 108128 / LMG 27833 / NCIMB 13906 / BL2)).